Consider the following 90-residue polypeptide: Small ribosomal subunit protein bS16 (90 aa).

This sequence belongs to the bacterial ribosomal protein bS16 family.

The polypeptide is Small ribosomal subunit protein bS16 (Lactococcus lactis subsp. lactis (strain IL1403) (Streptococcus lactis)).